Reading from the N-terminus, the 197-residue chain is dTTP/UTP pyrophosphatase (197 aa).

Catalysis depends on aspartate 70, which acts as the Proton acceptor.

It belongs to the Maf family. YhdE subfamily. It depends on a divalent metal cation as a cofactor.

Its subcellular location is the cytoplasm. The enzyme catalyses dTTP + H2O = dTMP + diphosphate + H(+). It catalyses the reaction UTP + H2O = UMP + diphosphate + H(+). In terms of biological role, nucleoside triphosphate pyrophosphatase that hydrolyzes dTTP and UTP. May have a dual role in cell division arrest and in preventing the incorporation of modified nucleotides into cellular nucleic acids. The protein is dTTP/UTP pyrophosphatase (yceF2) of Salmonella choleraesuis (strain SC-B67).